Here is a 31-residue protein sequence, read N- to C-terminus: Photosystem II reaction center protein M (31 aa).

The helical transmembrane segment at 5–25 (ILALMATALFIIIPTAFLIIL) threads the bilayer.

Belongs to the PsbM family. As to quaternary structure, PSII is composed of 1 copy each of membrane proteins PsbA, PsbB, PsbC, PsbD, PsbE, PsbF, PsbH, PsbI, PsbJ, PsbK, PsbL, PsbM, PsbT, PsbX, PsbY, PsbZ, Psb30/Ycf12, at least 3 peripheral proteins of the oxygen-evolving complex and a large number of cofactors. It forms dimeric complexes.

It localises to the plastid. The protein localises to the chloroplast thylakoid membrane. In terms of biological role, one of the components of the core complex of photosystem II (PSII). PSII is a light-driven water:plastoquinone oxidoreductase that uses light energy to abstract electrons from H(2)O, generating O(2) and a proton gradient subsequently used for ATP formation. It consists of a core antenna complex that captures photons, and an electron transfer chain that converts photonic excitation into a charge separation. This subunit is found at the monomer-monomer interface. This chain is Photosystem II reaction center protein M, found in Mesostigma viride (Green alga).